The primary structure comprises 208 residues: Uridine kinase (208 aa).

ATP is bound at residue 11–18; it reads GGSGSGKT.

The protein belongs to the uridine kinase family.

Its subcellular location is the cytoplasm. It catalyses the reaction uridine + ATP = UMP + ADP + H(+). It carries out the reaction cytidine + ATP = CMP + ADP + H(+). It functions in the pathway pyrimidine metabolism; CTP biosynthesis via salvage pathway; CTP from cytidine: step 1/3. Its pathway is pyrimidine metabolism; UMP biosynthesis via salvage pathway; UMP from uridine: step 1/1. In Staphylococcus carnosus (strain TM300), this protein is Uridine kinase.